The primary structure comprises 257 residues: Transcription factor GHD7 (257 aa).

Ser-68 carries the post-translational modification Phosphoserine; by CK1. Positions 190 to 232 (REAKLMRYKEKRKKRCYEKQIRYASRKAYAEMRPRVRGRFAKE) constitute a CCT domain. The short motif at 198–204 (KEKRKKR) is the Nuclear localization signal element. Residues 226–245 (RGRFAKEPDQEAVAPPSTYV) are disordered.

In terms of assembly, interacts with HD16/EL1. Post-translationally, phosphorylated at Ser-68 by HD16/EL1, a casein kinase 1. As to expression, expressed in the apical meristem, developing leaves, leaf sheaths of young seedling, root meristem, epidermal layer of developing stems and branch-primordia of developing panicles.

It is found in the nucleus. Its function is as follows. Probable transcription factor involved in the regulation of flowering time under long day (LD) conditions. Plays a major role as repressor of flowering. Controls flowering time by negatively regulating the expression of EHD1 and HD3A. The polypeptide is Transcription factor GHD7 (Oryza sativa subsp. japonica (Rice)).